The chain runs to 342 residues: Methylthioribose-1-phosphate isomerase (342 aa).

Substrate is bound by residues 44-46, arginine 85, and glutamine 192; that span reads RGA. The active-site Proton donor is aspartate 233. 243 to 244 contacts substrate; that stretch reads NK.

This sequence belongs to the eIF-2B alpha/beta/delta subunits family. MtnA subfamily.

It catalyses the reaction 5-(methylsulfanyl)-alpha-D-ribose 1-phosphate = 5-(methylsulfanyl)-D-ribulose 1-phosphate. It functions in the pathway amino-acid biosynthesis; L-methionine biosynthesis via salvage pathway; L-methionine from S-methyl-5-thio-alpha-D-ribose 1-phosphate: step 1/6. Functionally, catalyzes the interconversion of methylthioribose-1-phosphate (MTR-1-P) into methylthioribulose-1-phosphate (MTRu-1-P). The polypeptide is Methylthioribose-1-phosphate isomerase (Caldicellulosiruptor saccharolyticus (strain ATCC 43494 / DSM 8903 / Tp8T 6331)).